The chain runs to 372 residues: MAQRALWRPQATPGPPGAAAPPGHRGAPPDARAPDPGPEADLVARIANSVFVWRVVRGDERLKIFRCLTVLTEPLCQVALPDPDPERALFCEIFLYLTRPKALRLPSNTFFAIFFFNRERRYCATVHLRSVTHPRTPLLCTLAFGHLEAASPPEETPDPAAEQLADEPVAHELDGAYLVPTDTAPESGACCALGPGAWWHLPGGRIYCWAMDDDLGSLCPPGSRARHLGWLLSRITDPPGGGGACAPTAHIDSANALWRAPAVAEACPCVAPCMWSNMAQRTLAVRGDASLCQLLFGHPVDAVILRQATRRPRITAHLHEVVVGRDGAESVIRPTSAGWRLCVLSSYTSRLFATSCPAVARAVARASSSDYK.

Residues 1–38 are disordered; the sequence is MAQRALWRPQATPGPPGAAAPPGHRGAPPDARAPDPGP. Over residues 20–30 the composition is skewed to low complexity; it reads APPGHRGAPPD.

Belongs to the herpesviridae cytoplasmic envelopment protein 2 family. As to quaternary structure, interacts with cytoplasmic envelopment protein 3 and with the capsid.

The protein resides in the virion tegument. The protein localises to the host cytoplasm. Its subcellular location is the host nucleus. Its function is as follows. Plays a critical role in cytoplasmic virus egress. Participates in the final step of tegumentation and envelope acquisition within the host cytoplasm by directly interacting with the capsid. Upon virion binding to target cell, a signaling cascade is triggered to disrupt the interaction with the capsid, thereby preparing capsid uncoating. The protein is Cytoplasmic envelopment protein 2 (UL16) of Human herpesvirus 2 (strain HG52) (HHV-2).